Here is a 132-residue protein sequence, read N- to C-terminus: Ribosome-binding factor A (132 aa).

This sequence belongs to the RbfA family. As to quaternary structure, monomer. Binds 30S ribosomal subunits, but not 50S ribosomal subunits or 70S ribosomes.

It is found in the cytoplasm. Functionally, one of several proteins that assist in the late maturation steps of the functional core of the 30S ribosomal subunit. Associates with free 30S ribosomal subunits (but not with 30S subunits that are part of 70S ribosomes or polysomes). Required for efficient processing of 16S rRNA. May interact with the 5'-terminal helix region of 16S rRNA. This is Ribosome-binding factor A from Treponema denticola (strain ATCC 35405 / DSM 14222 / CIP 103919 / JCM 8153 / KCTC 15104).